The following is a 702-amino-acid chain: MAEDTDGGIRFNSLCFINDHVGFQGSIKTSPSDFIVIEIDEQGQLVSKATDGSLYEISKIQSEPSNSVKKPKLNIQNVSLEHKNSEGAADLPGCSDGDRSHQSDSEKENSVNSVTSKCEEESVDLLRSLLDEKTHTSLGQFACDIKRMWNSQTELTEPSPELSLGKILDKNRRAVLHSAVRQAFPFLITVGNQGEVVVKPNRECKELCRLVSEEEALGFFKYLDAKKENSKFTFKPDPNKDHRKAVHHFLNKKFGNLVETKSFPGQHHSAGNPDSAITVRFREKARGKRSHPEGCERGKAVYTAFTLQKENLETFEAIGLLAVKLGVIPSDFSYAGLKDKRAITYQSMVVKKVTPERLKSIKEEIEKKRMNVFNIRSVGDCLRLGQLKGNHFEIIIRHLRNQLNDSANLTERILEAIENVKNKGFVNYYGPQRFGKGQKIQTDQIGLALLKNEMVKAIKLFLTPEDVDDPVNKAKQYFLRTEDAKGTLSLMPEFRVRERALLESLHRFGVTEEGCVRAWFSFPHSMRIFYIHAYSSRIWNEAASYRLAAYGPKVVEGDLICSDEDADKHFPSSKVHLVTKEEESAHTYALHQVVLPVLGYNVQYPENQVGRWYQEALSRDGLQACRFRVPALKLNVPGCYRHIVKHPRNVSHRLVHPDPATEEARVEGPHSDDTASSLSLSFDLDASCYATVCLREMMKGDI.

S79 bears the Phosphoserine mark. The interval 84–116 (NSEGAADLPGCSDGDRSHQSDSEKENSVNSVTS) is disordered. Residues 96-109 (DGDRSHQSDSEKEN) are compositionally biased toward basic and acidic residues. D339 functions as the Nucleophile in the catalytic mechanism. The region spanning 424-646 (GFVNYYGPQR…PGCYRHIVKH (223 aa)) is the TRUD domain.

This sequence belongs to the pseudouridine synthase TruD family.

It carries out the reaction a uridine in mRNA = a pseudouridine in mRNA. In terms of biological role, pseudouridine synthase that catalyzes pseudouridylation of mRNAs. In Mus musculus (Mouse), this protein is Pseudouridylate synthase PUS7L.